The sequence spans 444 residues: Pre-mRNA-splicing factor cwc25 (444 aa).

Disordered stretches follow at residues 1-27, 168-385, and 397-425; these read MGSGDLNMKKSWHPQRSGNVAATQKAE, LASM…TDLD, and EAERAEREADEKARQQNKKFRGGDAGFMS. The stretch at 19 to 65 forms a coiled coil; that stretch reads NVAATQKAEAEAIAERKKLQQRLQEIEEERRKEEIQKALEAAGGKRK. Over residues 186–199 the composition is skewed to basic residues; the sequence is QRRHKHRSHHHRSD. Composition is skewed to basic and acidic residues over residues 200–220 and 228–281; these read RHRDRDDDRDRDSARDRDRDR and DSRD…DDRS. Residues 282 to 293 show a composition bias toward basic residues; the sequence is RRHRFPQGRSRS. Basic and acidic residues-rich tracts occupy residues 305-344, 360-372, and 397-410; these read RREYSRERDSGGPSSRRDDRNSRDQNRPRRDYAKEDEQPK, DGDHKNAEEERAK, and EAERAEREADEKAR. The stretch at 364 to 417 forms a coiled coil; the sequence is KNAEEERAKKLAAMQAAATDLDKAREERLKALAEAERAEREADEKARQQNKKFR.

It belongs to the CWC25 family. In terms of assembly, associated with the spliceosome.

Its subcellular location is the nucleus. Its function is as follows. Involved in pre-mRNA splicing. This is Pre-mRNA-splicing factor cwc25 (msp-6) from Neurospora crassa (strain ATCC 24698 / 74-OR23-1A / CBS 708.71 / DSM 1257 / FGSC 987).